Reading from the N-terminus, the 120-residue chain is NAD(P)H-quinone oxidoreductase subunit 3, chloroplastic (120 aa).

3 helical membrane passes run 9–29 (IFWA…LISG), 64–84 (MFAL…PWAM), and 88–108 (VLGV…IVGS).

It belongs to the complex I subunit 3 family. As to quaternary structure, NDH is composed of at least 16 different subunits, 5 of which are encoded in the nucleus.

The protein localises to the plastid. Its subcellular location is the chloroplast thylakoid membrane. The catalysed reaction is a plastoquinone + NADH + (n+1) H(+)(in) = a plastoquinol + NAD(+) + n H(+)(out). The enzyme catalyses a plastoquinone + NADPH + (n+1) H(+)(in) = a plastoquinol + NADP(+) + n H(+)(out). NDH shuttles electrons from NAD(P)H:plastoquinone, via FMN and iron-sulfur (Fe-S) centers, to quinones in the photosynthetic chain and possibly in a chloroplast respiratory chain. The immediate electron acceptor for the enzyme in this species is believed to be plastoquinone. Couples the redox reaction to proton translocation, and thus conserves the redox energy in a proton gradient. This chain is NAD(P)H-quinone oxidoreductase subunit 3, chloroplastic, found in Gossypium hirsutum (Upland cotton).